We begin with the raw amino-acid sequence, 1423 residues long: uncharacterized protein (1423 aa).

An N-terminal signal peptide occupies residues 1–28 (MTSSVRLAFLATLLLLLPLEAQIQQANS). Topologically, residues 29–1321 (ANVNQNVGQQ…RSREKQNFLT (1293 aa)) are extracellular. 6 N-linked (GlcNAc...) asparagine glycosylation sites follow: Asn94, Asn306, Asn355, Asn483, Asn666, and Asn903. The NIDO domain maps to 184–347 (SFFGQSASKA…GRYMFRVDDV (164 aa)). One can recognise an AMOP domain in the interval 638–818 (VKKKSLEMCH…FRCQMFYWRR (181 aa)). A helical membrane pass occupies residues 1322 to 1342 (WLAIIGGIFGVLVFVILIFLC). Residues 1343–1423 (CWIVKQKKKG…EDLHGLKTSV (81 aa)) are Cytoplasmic-facing. The segment at 1364–1401 (SRSSMTGSRGGKKYPIHESEPLNEKRFDADTYRDDDFY) is disordered. The segment covering 1378 to 1401 (PIHESEPLNEKRFDADTYRDDDFY) has biased composition (basic and acidic residues).

Its subcellular location is the membrane. This is an uncharacterized protein from Caenorhabditis elegans.